A 98-amino-acid polypeptide reads, in one-letter code: Parvalbumin beta 1 (98 aa).

The residue at position 1 (S1) is an N-acetylserine. 2 EF-hand domains span residues 32–67 (KIGL…FSAG) and 67–98 (GARA…MIKG). 11 residues coordinate Ca(2+): D45, D47, S49, F51, E53, E56, D80, D82, D84, K86, and E91.

The protein belongs to the parvalbumin family.

In muscle, parvalbumin is thought to be involved in relaxation after contraction. It binds two calcium ions. The polypeptide is Parvalbumin beta 1 (Macruronus magellanicus (Patagonian grenadier)).